Here is a 597-residue protein sequence, read N- to C-terminus: Medium/long-chain-fatty-acid--CoA ligase FadD6 (597 aa).

This sequence belongs to the ATP-dependent AMP-binding enzyme family.

The catalysed reaction is a medium-chain fatty acid + ATP + CoA = a medium-chain fatty acyl-CoA + AMP + diphosphate. The enzyme catalyses a long-chain fatty acid + ATP + CoA = a long-chain fatty acyl-CoA + AMP + diphosphate. It carries out the reaction hexanoate + ATP + CoA = hexanoyl-CoA + AMP + diphosphate. It catalyses the reaction octanoate + ATP + CoA = octanoyl-CoA + AMP + diphosphate. The catalysed reaction is decanoate + ATP + CoA = decanoyl-CoA + AMP + diphosphate. The enzyme catalyses dodecanoate + ATP + CoA = dodecanoyl-CoA + AMP + diphosphate. It carries out the reaction tetradecanoate + ATP + CoA = tetradecanoyl-CoA + AMP + diphosphate. It catalyses the reaction hexadecanoate + ATP + CoA = hexadecanoyl-CoA + AMP + diphosphate. The catalysed reaction is octadecanoate + ATP + CoA = octadecanoyl-CoA + AMP + diphosphate. The enzyme catalyses 9-decenoate + ATP + CoA = 9-decenoyl-CoA + AMP + diphosphate. It carries out the reaction (9Z)-octadecenoate + ATP + CoA = (9Z)-octadecenoyl-CoA + AMP + diphosphate. It catalyses the reaction 2-hydroxyhexadecanoate + ATP + CoA = 2-hydroxyhexadecanoyl-CoA + AMP + diphosphate. The catalysed reaction is 3-hydroxytetradecanoate + ATP + CoA = 3-hydroxytetradecanoyl-CoA + AMP + diphosphate. The enzyme catalyses 12-hydroxyoctadecanoate + ATP + CoA = 12-hydroxyoctadecanoyl-CoA + AMP + diphosphate. It carries out the reaction 15-hydroxypentadecanoate + ATP + CoA = 15-hydroxypentadecanoyl-CoA + AMP + diphosphate. It catalyses the reaction 16-hydroxyhexadecanoate + ATP + CoA = 16-hydroxyhexadecanoyl-CoA + AMP + diphosphate. The catalysed reaction is 2-methylhexadecanoate + ATP + CoA = 2-methylhexadecanoyl-CoA + AMP + diphosphate. The enzyme catalyses 3-methylundecanoate + ATP + CoA = 3-methylundecanoyl-CoA + AMP + diphosphate. It carries out the reaction 12-methyltridecanoate + ATP + CoA = 12-methyltridecanoyl-CoA + AMP + diphosphate. It catalyses the reaction 12-methyloctadecanoate + ATP + CoA = 12-methyloctadecanoyl-CoA + AMP + diphosphate. Catalyzes the activation of medium/long-chain fatty acids as acyl-coenzyme A (acyl-CoA). May play a role in the uptake of fatty acids by trapping them metabolically as CoA esters. May also play an important role in the channeling of fatty acids into triacylglycerol (TAG) for use by Mycobacterium during its dormancy. The protein is Medium/long-chain-fatty-acid--CoA ligase FadD6 of Mycobacterium tuberculosis (strain ATCC 25618 / H37Rv).